The sequence spans 815 residues: uncharacterized protein (815 aa).

The signal sequence occupies residues Met-1–Ala-21. Cys-795 and Cys-814 form a disulfide bridge.

The protein belongs to the fimbrial export usher family.

It localises to the cell outer membrane. Could be involved in the export and assembly of the putative YbgD fimbrial subunit across the outer membrane. This is an uncharacterized protein from Escherichia coli (strain K12).